A 316-amino-acid polypeptide reads, in one-letter code: MSDISKASLPKAIFLMGPTASGKTALAIELRKILPVELISVDSVLIYKGMDIGTAKPNAEELLAAPHRLLDIRDPSQAYSAADFRRDALAEMADITAAGRIPLLVGGTMLYFKALLEGLSPLPSADPEVRARIEQQAAEQGWESLHRQLQEVDPVAAARIHPNDPQRLSRALEVFFISGKTLTELTQTSGDALPYQVHQFAIAPASRELLHQRIEQRFHQMLASGFEAEVRALFARGDLHTDLPSIRCVGYRQMWSYLEGEISYDEMVYRGVCATRQLAKRQITWLRGWEGVHWLDSEKPEQARDEVLQVVGAIAG.

17–24 is an ATP binding site; the sequence is GPTASGKT. 19–24 provides a ligand contact to substrate; that stretch reads TASGKT. Interaction with substrate tRNA stretches follow at residues 42–45, 166–170, 247–252, and 280–287; these read DSVL, QRLSR, RCVGYR, and KRQITWLR.

The protein belongs to the IPP transferase family. As to quaternary structure, monomer. The cofactor is Mg(2+).

It catalyses the reaction adenosine(37) in tRNA + dimethylallyl diphosphate = N(6)-dimethylallyladenosine(37) in tRNA + diphosphate. Functionally, catalyzes the transfer of a dimethylallyl group onto the adenine at position 37 in tRNAs that read codons beginning with uridine, leading to the formation of N6-(dimethylallyl)adenosine (i(6)A). This is tRNA dimethylallyltransferase from Shigella flexneri.